Consider the following 60-residue polypeptide: Toxin C10S2C2 (60 aa).

4 disulfide bridges follow: cysteine 3/cysteine 22, cysteine 17/cysteine 39, cysteine 41/cysteine 52, and cysteine 53/cysteine 58. Residues 41-48 are important for binding to L-type calcium channels; that stretch reads CPTAMWPY.

It belongs to the three-finger toxin family. Short-chain subfamily. L-type calcium blocker sub-subfamily. Expressed by the venom gland.

It localises to the secreted. In terms of biological role, this specific blocker of the L-type calcium channel (Cav1/CACNA1) is a smooth muscle relaxant and an inhibitor of cardiac contractions. In Dendroaspis angusticeps (Eastern green mamba), this protein is Toxin C10S2C2.